The primary structure comprises 300 residues: uncharacterized protein (300 aa).

The first 19 residues, 1-19, serve as a signal peptide directing secretion; sequence MKLKLLLIPLLGSSLLLSA. Residue C20 is the site of N-palmitoyl cysteine attachment. C20 carries the S-diacylglycerol cysteine lipid modification.

It belongs to the MG439/MG440 family.

The protein localises to the cell membrane. This is an uncharacterized protein from Mycoplasma pneumoniae (strain ATCC 29342 / M129 / Subtype 1) (Mycoplasmoides pneumoniae).